The chain runs to 155 residues: MSLMIEVLREPWADEAIPLPSYATVGAAGADLRANLPPEIRDQGVEIQPLCRVIVPTGLRVAIPAGYEMQIRPRSGLALKHGLSLPNTPGTIDSDYRGPLGVLLTVIGTEAVTLHHGDRIAQAVIAPVVQAVFAPVDRLEETARGAGGFGSTGRG.

Substrate is bound by residues 74 to 76 (RSG), Asn87, and 91 to 93 (TID).

Belongs to the dUTPase family. It depends on Mg(2+) as a cofactor.

It carries out the reaction dUTP + H2O = dUMP + diphosphate + H(+). It participates in pyrimidine metabolism; dUMP biosynthesis; dUMP from dCTP (dUTP route): step 2/2. In terms of biological role, this enzyme is involved in nucleotide metabolism: it produces dUMP, the immediate precursor of thymidine nucleotides and it decreases the intracellular concentration of dUTP so that uracil cannot be incorporated into DNA. The protein is Deoxyuridine 5'-triphosphate nucleotidohydrolase of Dinoroseobacter shibae (strain DSM 16493 / NCIMB 14021 / DFL 12).